The chain runs to 337 residues: Inositol 2-dehydrogenase (337 aa).

The protein belongs to the Gfo/Idh/MocA family. Homotetramer.

The catalysed reaction is myo-inositol + NAD(+) = scyllo-inosose + NADH + H(+). Involved in the oxidation of myo-inositol (MI) to 2-keto-myo-inositol (2KMI or 2-inosose). In Burkholderia multivorans (strain ATCC 17616 / 249), this protein is Inositol 2-dehydrogenase.